Here is a 309-residue protein sequence, read N- to C-terminus: Glutaminase 2 (309 aa).

Substrate contacts are provided by Ser-65, Asn-117, Glu-162, Asn-169, Tyr-193, Tyr-245, and Val-263.

The protein belongs to the glutaminase family. In terms of assembly, homotetramer.

The catalysed reaction is L-glutamine + H2O = L-glutamate + NH4(+). This is Glutaminase 2 from Bacillus subtilis (strain 168).